The chain runs to 873 residues: Leucine--tRNA ligase (873 aa).

Residues Pro-42–His-52 carry the 'HIGH' region motif. Positions Pro-624–Pro-643 are disordered. The short motif at Lys-632–Ser-636 is the 'KMSKS' region element. Lys-635 is a binding site for ATP.

The protein belongs to the class-I aminoacyl-tRNA synthetase family.

It localises to the cytoplasm. The catalysed reaction is tRNA(Leu) + L-leucine + ATP = L-leucyl-tRNA(Leu) + AMP + diphosphate. In Pseudomonas aeruginosa (strain LESB58), this protein is Leucine--tRNA ligase.